The following is a 265-amino-acid chain: Membrane steroid-binding protein 2 (265 aa).

Residues 63–85 (WAAARSASPVAVIAAVAGAAVVY) form a helical membrane-spanning segment. A disordered region spans residues 94–116 (PPPPPARPREEPSEEAPPPPEPV). Residues 118 to 217 (VGEITAEELL…SKYVKVGTIK (100 aa)) form the Cytochrome b5 heme-binding domain. Residues 120–217 (EITAEELLQY…SKYVKVGTIK (98 aa)) form a steroid-binding region.

Belongs to the cytochrome b5 family. MAPR subfamily.

It is found in the cell membrane. In terms of biological role, binds multiple steroid compounds. The polypeptide is Membrane steroid-binding protein 2 (Oryza sativa subsp. japonica (Rice)).